The following is a 113-amino-acid chain: Early nodulin-12B (113 aa).

Positions 1 to 24 (MASFSLSILVFFISALVLVPQGFA) are cleaved as a signal peptide. The disordered stretch occupies residues 29 to 113 (NPAYRPPQTK…HPPAEDNIHF (85 aa)). Positions 32-42 (YRPPQTKPPVN) are enriched in pro residues. Repeat copies occupy residues 34-38 (PPQTK) and 39-43 (PPVNK). The segment at 34–109 (PPQTKPPVNK…PTHKHPPAED (76 aa)) is 15 X 5 AA approximate tandem repeats of P-P-[QVHRTA]-[NHKE]-[KEDT]. A 3; approximate repeat occupies 44–48 (PSHKE). Basic and acidic residues-rich tracts occupy residues 45 to 60 (SHKEPPVHKPPHKEPP) and 67 to 113 (KEPP…NIHF). A run of 3 repeats spans residues 49 to 53 (PPVHK), 54 to 58 (PPHKE), and 59 to 63 (PPVNK). A 7; approximate repeat occupies 64–68 (PRHKE). A run of 4 repeats spans residues 69–73 (PPVHK), 74–78 (PPHKD), 79–83 (PPVNK), and 84–88 (PPQKE). One copy of the 12; approximate repeat lies at 89-93 (SPVHK). A run of 3 repeats spans residues 94 to 98 (PPRKE), 99 to 103 (PPTHK), and 105 to 109 (PPAED).

The protein belongs to the plant proline-rich protein superfamily. ENOD12 family. In terms of tissue distribution, expressed only in young nodules.

It is found in the secreted. It localises to the cell wall. Involved in the infection process during the plant-rhizobium interaction. This Medicago sativa (Alfalfa) protein is Early nodulin-12B (ENOD12B).